An 813-amino-acid polypeptide reads, in one-letter code: MDGVGLCANNKQKQNQMLPNKMRGEFTRNQRKDSEGLSEAPDLEFEYSDADKWTAELSELYSYTEGPEFLLNRKCFEEDFHTHLPDQKWTELDSVQRRAHAMRLLDGLEVIGRERRLKVARAILYMAQGTFGECSSELEVQHWMRYNVFLLLDVGAFTALVELLNMEIDNSAACSSAVRKPAISLADSTDLRVLLNIMYLMVETIQREEPTDSPEWRTIRETFKSELGSPLYNHEPVSVMLFGMVTKFCSGHAPHFPMKKVLLLLWKTILFTLGGFEQLQSCKISRRAALGLPPLPEDSIRVVRSMRAASPPASASDLIEQQQRRARREHKALIKQDNLDTFNEKDPYKADDSHEDEEENDDNDNSLEAEPFPLERDEVMPPPIPHPPTERMCFPKGLPWAPKVREKDIESFLESSRSKFIGYTLGNDTDTVVGLPRPIHESIKTLKQHKYVSIAEVQIAKEEAFQKTPLSGGEEELELCATELLYQGILPSLPQYMIALLKILLAAAPTSKAKTDSINILADVLPEEMPTTVLQSMKLGVDVNRHKEIIVKAISAILLLLLKHFKLNHVYQFEYMAQHLVFANCIPLILKFFNQNIMSYITAKNSISALDFPHCVIHELPELTAESLEAGDNNQFCWRNLFSCINLLRILNKLTKWKHSRTMMLVVFKSAPILKRALKVKQAMMQLYVLKLLKVQTKYLGRQWRKGNMKTMSAIYQKVRHRLNDDWAYGNDLDARPWDFQAEECALRANIERFNSRRYDKNQSNPEFLPVDNCLQSVLGQRIDLPEDFQMNYDLWLEREVFSKPISWEELLQ.

2 disordered regions span residues 1 to 41 and 307 to 379; these read MDGV…SEAP and RAAS…RDEV. Residues 9–18 show a composition bias toward polar residues; it reads NNKQKQNQML. A compositionally biased stretch (basic and acidic residues) spans 22–35; sequence MRGEFTRNQRKDSE. Residues 307-316 are compositionally biased toward low complexity; it reads RAASPPASAS. Ser310 carries the post-translational modification Phosphoserine. Basic and acidic residues predominate over residues 331-352; that stretch reads KALIKQDNLDTFNEKDPYKADD. The segment covering 353–367 has biased composition (acidic residues); sequence SHEDEEENDDNDNSL.

It belongs to the STRIP family. As to quaternary structure, part of the core of STRIPAK complexes composed of PP2A catalytic and scaffolding subunits, the striatins (PP2A regulatory subunits), the striatin-associated proteins MOB4, STRIP1 and STRIP2, PDCD10 and members of the STE20 kinases, such as STK24 and STK26.

The protein resides in the cytoplasm. Its function is as follows. Plays a role in the regulation of cell morphology and cytoskeletal organization. Required in the cortical actin filament dynamics and cell shape. Part of the striatin-interacting phosphatase and kinase (STRIPAK) complexes. STRIPAK complexes have critical roles in protein (de)phosphorylation and are regulators of multiple signaling pathways including Hippo, MAPK, nuclear receptor and cytoskeleton remodeling. Different types of STRIPAK complexes are involved in a variety of biological processes such as cell growth, differentiation, apoptosis, metabolism and immune regulation. The chain is Striatin-interacting protein 1 homolog (strip1) from Danio rerio (Zebrafish).